A 570-amino-acid polypeptide reads, in one-letter code: Peptidyl-prolyl cis-trans isomerase FKBP9 (570 aa).

An N-terminal signal peptide occupies residues 1-24 (MAFGARGWRRWSLLLLLLWVTGQA). 4 consecutive PPIase FKBP-type domains span residues 54-142 (GDFV…VDIW), 166-254 (SDFV…LDLH), 278-365 (GDFL…IDFH), and 389-477 (GDYL…LELV). Residues N174, N286, N302, and N397 are each glycosylated (N-linked (GlcNAc...) asparagine). EF-hand domains are found at residues 488–523 (WNGE…QVAS) and 533–568 (NAEM…TKHD). 10 residues coordinate Ca(2+): D501, D503, N505, E507, E512, D546, N548, D550, K552, and E557. The short motif at 567 to 570 (HDEL) is the Prevents secretion from ER element.

In terms of processing, phosphorylated.

The protein localises to the endoplasmic reticulum lumen. It catalyses the reaction [protein]-peptidylproline (omega=180) = [protein]-peptidylproline (omega=0). Inhibited by FK506. In terms of biological role, PPIases accelerate the folding of proteins during protein synthesis. This chain is Peptidyl-prolyl cis-trans isomerase FKBP9 (Fkbp9), found in Rattus norvegicus (Rat).